Here is a 290-residue protein sequence, read N- to C-terminus: 33 kDa chaperonin (290 aa).

2 disulfide bridges follow: Cys236–Cys238 and Cys269–Cys272.

This sequence belongs to the HSP33 family. Post-translationally, under oxidizing conditions two disulfide bonds are formed involving the reactive cysteines. Under reducing conditions zinc is bound to the reactive cysteines and the protein is inactive.

It is found in the cytoplasm. Functionally, redox regulated molecular chaperone. Protects both thermally unfolding and oxidatively damaged proteins from irreversible aggregation. Plays an important role in the bacterial defense system toward oxidative stress. The chain is 33 kDa chaperonin from Brevibacillus brevis (strain 47 / JCM 6285 / NBRC 100599).